The following is a 361-amino-acid chain: tRNA/tmRNA (uracil-C(5))-methyltransferase (361 aa).

Residues glutamine 185, tyrosine 213, asparagine 218, glutamate 234, and aspartate 294 each contribute to the S-adenosyl-L-methionine site. Cysteine 319 acts as the Nucleophile in catalysis. Residue glutamate 353 is the Proton acceptor of the active site.

The protein belongs to the class I-like SAM-binding methyltransferase superfamily. RNA M5U methyltransferase family. TrmA subfamily.

It catalyses the reaction uridine(54) in tRNA + S-adenosyl-L-methionine = 5-methyluridine(54) in tRNA + S-adenosyl-L-homocysteine + H(+). The catalysed reaction is uridine(341) in tmRNA + S-adenosyl-L-methionine = 5-methyluridine(341) in tmRNA + S-adenosyl-L-homocysteine + H(+). Functionally, dual-specificity methyltransferase that catalyzes the formation of 5-methyluridine at position 54 (m5U54) in all tRNAs, and that of position 341 (m5U341) in tmRNA (transfer-mRNA). This chain is tRNA/tmRNA (uracil-C(5))-methyltransferase, found in Pseudomonas putida (strain W619).